The primary structure comprises 181 residues: Trafficking protein particle complex subunit 3 homolog (181 aa).

Cys70 carries S-palmitoyl cysteine lipidation.

It belongs to the TRAPP small subunits family. BET3 subfamily. In terms of assembly, homodimer. Part of the multisubunit TRAPP (transport protein particle) complex.

Its subcellular location is the golgi apparatus. The protein localises to the cis-Golgi network. The protein resides in the endoplasmic reticulum. Its function is as follows. May play a role in vesicular transport from endoplasmic reticulum to Golgi. Required for the systemic spread of the RNAi response. The polypeptide is Trafficking protein particle complex subunit 3 homolog (Caenorhabditis briggsae).